A 460-amino-acid chain; its full sequence is Probable Xaa-Pro aminopeptidase PEPP (460 aa).

Residues D256, D267, E390, and E430 each contribute to the Mn(2+) site.

The protein belongs to the peptidase M24B family. Mn(2+) serves as cofactor.

The enzyme catalyses Release of any N-terminal amino acid, including proline, that is linked to proline, even from a dipeptide or tripeptide.. Functionally, catalyzes the removal of a penultimate prolyl residue from the N-termini of peptides. The polypeptide is Probable Xaa-Pro aminopeptidase PEPP (PEPP) (Podospora anserina (strain S / ATCC MYA-4624 / DSM 980 / FGSC 10383) (Pleurage anserina)).